We begin with the raw amino-acid sequence, 282 residues long: 4-diphosphocytidyl-2-C-methyl-D-erythritol kinase (282 aa).

Lys13 is a catalytic residue. Residue 96–106 (PMGGGIGGGSS) coordinates ATP. Residue Asp138 is part of the active site.

The protein belongs to the GHMP kinase family. IspE subfamily.

The catalysed reaction is 4-CDP-2-C-methyl-D-erythritol + ATP = 4-CDP-2-C-methyl-D-erythritol 2-phosphate + ADP + H(+). The protein operates within isoprenoid biosynthesis; isopentenyl diphosphate biosynthesis via DXP pathway; isopentenyl diphosphate from 1-deoxy-D-xylulose 5-phosphate: step 3/6. Catalyzes the phosphorylation of the position 2 hydroxy group of 4-diphosphocytidyl-2C-methyl-D-erythritol. The polypeptide is 4-diphosphocytidyl-2-C-methyl-D-erythritol kinase (Pseudomonas syringae pv. syringae (strain B728a)).